The chain runs to 349 residues: Dihydroorotate dehydrogenase (quinone) (349 aa).

Residues 67 to 71 (AGLDK) and Thr91 each bind FMN. A substrate-binding site is contributed by Lys71. Position 116 to 120 (116 to 120 (NRLGF)) interacts with substrate. Residues Asn147 and Asn180 each contribute to the FMN site. Asn180 is a binding site for substrate. Ser183 serves as the catalytic Nucleophile. Residue Asn185 participates in substrate binding. 2 residues coordinate FMN: Lys225 and Thr253. 254–255 (NT) is a substrate binding site. FMN contacts are provided by residues Gly276, Gly305, and 326-327 (YT).

Belongs to the dihydroorotate dehydrogenase family. Type 2 subfamily. In terms of assembly, monomer. FMN is required as a cofactor.

Its subcellular location is the cell membrane. It catalyses the reaction (S)-dihydroorotate + a quinone = orotate + a quinol. It functions in the pathway pyrimidine metabolism; UMP biosynthesis via de novo pathway; orotate from (S)-dihydroorotate (quinone route): step 1/1. Catalyzes the conversion of dihydroorotate to orotate with quinone as electron acceptor. This Bordetella parapertussis (strain 12822 / ATCC BAA-587 / NCTC 13253) protein is Dihydroorotate dehydrogenase (quinone).